The chain runs to 493 residues: D-glyceraldehyde dehydrogenase (NADP(+)) (493 aa).

NADP(+)-binding positions include 144 to 147 (TPWN), Arg-155, 170 to 174 (KPSSD), 202 to 208 (KGSEIGD), 223 to 246 (GSTS…ILEL), Cys-279, and 379 to 381 (EIF). Residues Asn-147 and Arg-155 each coordinate substrate. Glu-245 (proton acceptor) is an active-site residue. Cys-279 serves as a coordination point for substrate. The active-site Proton donor is Cys-279.

It belongs to the aldehyde dehydrogenase family. Glyceraldehyde dehydrogenase subfamily. As to quaternary structure, homotetramer. Dimer of dimers.

The enzyme catalyses D-glyceraldehyde + NADP(+) + H2O = (R)-glycerate + NADPH + 2 H(+). It functions in the pathway carbohydrate degradation; glycolysis. With respect to regulation, stable for 2 hours at 60 degrees Celsius but activity is decreased to less than 50 percent within 15 minutes at 70 degrees Celsius. In terms of biological role, NADP-dependent dehydrogenase of the nED (non-phosphorylated Entner-Doudoroff) pathway with highest activity towards glyceraldehydes (e.g. D,L-glyceraldehyde and D-glyceraldehyde), to a lesser extent towards D,L-glyceraldehyde-3-phosphate and glycolaldehyde, but no activity towards aliphatic or aromatic aldehydes. In Picrophilus torridus (strain ATCC 700027 / DSM 9790 / JCM 10055 / NBRC 100828 / KAW 2/3), this protein is D-glyceraldehyde dehydrogenase (NADP(+)).